Reading from the N-terminus, the 582-residue chain is Protein LYRIC (582 aa).

At 1–48 (MAARSWQDELAQQAEEGSARLREMLSVGLGFLRTELGLDLGLEPKRYP) the chain is on the lumenal side. An activation of NF-kappa-B region spans residues 1–71 (MAARSWQDEL…LLLFLLGYGW (71 aa)). The helical transmembrane segment at 49 to 69 (GWVILVGTGALGLLLLFLLGY) threads the bilayer. Residues 70-582 (GWAAACAGAR…KKKKKARRET (513 aa)) are Cytoplasmic-facing. The tract at residues 72–169 (AAACAGARKK…EKSKKNKKKS (98 aa)) is interaction with BCCIP. Residues 78 to 222 (ARKKRRSPPR…DSGSLDSTIP (145 aa)) are disordered. Positions 93–106 (AAVPAAAPDDLALL) are enriched in low complexity. Positions 101-205 (DDLALLKNLR…ISHREKRQQR (105 aa)) are interaction with RELA. Basic and acidic residues predominate over residues 109–127 (LRSEEQKKKNRKKLSEKPK). Phosphothreonine is present on Thr-143. The span at 160 to 169 (EKSKKNKKKS) shows a compositional bias: basic residues. Phosphoserine is present on Ser-180. Positions 198–208 (HREKRQQRKRD) are enriched in basic residues. Ser-216 and Ser-251 each carry phosphoserine. At Lys-264 the chain carries N6-acetyllysine. Residues 280 to 582 (TVNGGGWNEK…KKKKKARRET (303 aa)) are disordered. Residues Ser-298, Ser-306, Ser-308, Ser-311, Ser-323, Ser-339, Ser-344, and Ser-369 each carry the phosphoserine modification. Residues 320–333 (SAWSQDTGDANTNG) are compositionally biased toward polar residues. 2 stretches are compositionally biased toward polar residues: residues 354-372 (EPVS…SRNQ) and 383-394 (NGLSSADPNSDW). The tract at residues 381–443 (GLNGLSSADP…EGALPTGKSK (63 aa)) is lung-homing for mammary tumors. Phosphoserine is present on residues Ser-415 and Ser-426. The span at 421–434 (DDQKVSDDDKEKGE) shows a compositional bias: basic and acidic residues. Over residues 441–451 (KSKKKKKKKKK) the composition is skewed to basic residues. Phosphoserine is present on Ser-457. Residue Thr-458 is modified to Phosphothreonine. 3 positions are modified to phosphoserine: Ser-478, Ser-494, and Ser-496. 2 stretches are compositionally biased toward polar residues: residues 504-520 (KNSQ…STEP) and 549-568 (NTKQ…SWES). Ser-568 is modified (phosphoserine). Basic residues predominate over residues 571–582 (QIKKKKKARRET).

Interacts with BCCIP, CREBBP/CBP and RELA/p65. As to expression, widely expressed with highest levels in muscle-dominating organs such as skeletal muscle, heart, tongue and small intestine and in endocrine glands such as thyroid and adrenal gland. Overexpressed in various cancers including breast, brain, prostate, melanoma and glioblastoma multiforme.

The protein localises to the endoplasmic reticulum membrane. It is found in the nucleus membrane. Its subcellular location is the cell junction. The protein resides in the tight junction. It localises to the nucleus. The protein localises to the nucleolus. It is found in the cytoplasm. Its subcellular location is the perinuclear region. Down-regulates SLC1A2/EAAT2 promoter activity when expressed ectopically. Activates the nuclear factor kappa-B (NF-kappa-B) transcription factor. Promotes anchorage-independent growth of immortalized melanocytes and astrocytes which is a key component in tumor cell expansion. Promotes lung metastasis and also has an effect on bone and brain metastasis, possibly by enhancing the seeding of tumor cells to the target organ endothelium. Induces chemoresistance. The polypeptide is Protein LYRIC (MTDH) (Homo sapiens (Human)).